The following is a 347-amino-acid chain: 4-hydroxy-2-oxovalerate aldolase (347 aa).

Residues 2–252 (ILISDATLRD…DTRTTFEHVM (251 aa)) enclose the Pyruvate carboxyltransferase domain. 10-11 (RD) contributes to the substrate binding site. Aspartate 11 provides a ligand contact to Mn(2+). The active-site Proton acceptor is the histidine 14. Substrate is bound by residues serine 164 and histidine 191. Positions 191 and 193 each coordinate Mn(2+).

This sequence belongs to the 4-hydroxy-2-oxovalerate aldolase family.

It carries out the reaction (S)-4-hydroxy-2-oxopentanoate = acetaldehyde + pyruvate. In Burkholderia thailandensis (strain ATCC 700388 / DSM 13276 / CCUG 48851 / CIP 106301 / E264), this protein is 4-hydroxy-2-oxovalerate aldolase (mhpE).